A 305-amino-acid chain; its full sequence is Flavin-dependent thymidylate synthase (305 aa).

Positions 50–261 constitute a ThyX domain; that stretch reads GFVRLIDYLG…PCATASFENH (212 aa). Residues Ser-96, 119–121, and Glu-127 each bind FAD; that span reads RHR. Residues 116–119, 127–131, and Arg-200 contribute to the dUMP site; these read QWMR and EVSSR. A ThyX motif motif is present at residues 119–129; sequence RHRTARISEVS. Residues 216-218 and His-222 each bind FAD; that span reads DLH. Position 227 (Arg-227) interacts with dUMP. Arg-227 acts as the Involved in ionization of N3 of dUMP, leading to its activation in catalysis.

It belongs to the thymidylate synthase ThyX family. Homotetramer. It depends on FAD as a cofactor.

It catalyses the reaction dUMP + (6R)-5,10-methylene-5,6,7,8-tetrahydrofolate + NADPH + H(+) = dTMP + (6S)-5,6,7,8-tetrahydrofolate + NADP(+). Its pathway is pyrimidine metabolism; dTTP biosynthesis. Functionally, catalyzes the reductive methylation of 2'-deoxyuridine-5'-monophosphate (dUMP) to 2'-deoxythymidine-5'-monophosphate (dTMP) while utilizing 5,10-methylenetetrahydrofolate (mTHF) as the methyl donor, and NADPH and FADH(2) as the reductant. The polypeptide is Flavin-dependent thymidylate synthase (Treponema pallidum (strain Nichols)).